The primary structure comprises 141 residues: Nucleoside diphosphate kinase (141 aa).

ATP contacts are provided by Lys-9, Phe-57, Arg-85, Thr-91, Arg-102, and Asn-112. The Pros-phosphohistidine intermediate role is filled by His-115.

The protein belongs to the NDK family. In terms of assembly, homotetramer. It depends on Mg(2+) as a cofactor.

The protein localises to the cytoplasm. It carries out the reaction a 2'-deoxyribonucleoside 5'-diphosphate + ATP = a 2'-deoxyribonucleoside 5'-triphosphate + ADP. It catalyses the reaction a ribonucleoside 5'-diphosphate + ATP = a ribonucleoside 5'-triphosphate + ADP. Major role in the synthesis of nucleoside triphosphates other than ATP. The ATP gamma phosphate is transferred to the NDP beta phosphate via a ping-pong mechanism, using a phosphorylated active-site intermediate. The chain is Nucleoside diphosphate kinase from Prosthecochloris aestuarii (strain DSM 271 / SK 413).